The primary structure comprises 376 residues: tRNA-specific 2-thiouridylase MnmA (376 aa).

ATP contacts are provided by residues 17 to 24 (GMSGGVDS) and methionine 43. Residues 103–105 (NPD) are interaction with target base in tRNA. Cysteine 108 acts as the Nucleophile in catalysis. An intrachain disulfide couples cysteine 108 to cysteine 204. Residue glycine 132 participates in ATP binding. Residues 154–156 (KDQ) form an interaction with tRNA region. Cysteine 204 serves as the catalytic Cysteine persulfide intermediate. The tract at residues 316–317 (RY) is interaction with tRNA.

The protein belongs to the MnmA/TRMU family.

The protein localises to the cytoplasm. It carries out the reaction S-sulfanyl-L-cysteinyl-[protein] + uridine(34) in tRNA + AH2 + ATP = 2-thiouridine(34) in tRNA + L-cysteinyl-[protein] + A + AMP + diphosphate + H(+). Functionally, catalyzes the 2-thiolation of uridine at the wobble position (U34) of tRNA, leading to the formation of s(2)U34. This is tRNA-specific 2-thiouridylase MnmA from Pseudomonas savastanoi pv. phaseolicola (strain 1448A / Race 6) (Pseudomonas syringae pv. phaseolicola (strain 1448A / Race 6)).